The primary structure comprises 230 residues: Ribonuclease 3 (230 aa).

One can recognise an RNase III domain in the interval 5–125; it reads YSRFYNILGY…VIGAIYLDSD (121 aa). Residue Glu40 coordinates Mg(2+). Asp44 is a catalytic residue. Residues Asp111 and Glu114 each contribute to the Mg(2+) site. The active site involves Glu114. The 71-residue stretch at 153 to 223 folds into the DRBM domain; that stretch reads DSKSKLQEIL…AEKMIEMLSQ (71 aa).

The protein belongs to the ribonuclease III family. Homodimer. Requires Mg(2+) as cofactor.

Its subcellular location is the cytoplasm. The enzyme catalyses Endonucleolytic cleavage to 5'-phosphomonoester.. Digests double-stranded RNA. Involved in the processing of primary rRNA transcript to yield the immediate precursors to the large and small rRNAs (23S and 16S). Processes some mRNAs, and tRNAs when they are encoded in the rRNA operon. Processes pre-crRNA and tracrRNA of type II CRISPR loci if present in the organism. This is Ribonuclease 3 from Francisella tularensis subsp. tularensis (strain WY96-3418).